The following is a 483-amino-acid chain: MNMPLSLMQFAPALPEIFVLAMVSLILVIDAAVGDGKRYLAYGLSLVTLAGAAFLTVRDFSTLPVLALGGLFIDDPLSDVLKLFLYLTVAIVLVYSRDYLRVRGLYKGEFFVLALFALLGMMVMVSASHFLTLYLGLELLSLSLYAMVALQRDSSVATEAAMKYFVLGALASGMLLYGMSMVYGVTGSLALGDIAIVLQDGTDLRIPLVFGIVFVVAGLAFKLGAVPFHMWVPDVYHGAPTAMTLFVGSAPKIAAFAFVVRVLGQGLESQVSEWRDMLVILAVLSMAIGNIAAIAQSNLKRMFAYSTISHMGFMLLGVLAGSQNGYGAAMFYVLVYTLMTLGGFGMILLLSRAGFESDRLDDFKGLNRRSPWLAFVMLLLMFSMTGIPPTVGFYAKLAVLQAVVEIGYVWLAVAAVLFSLVGAFYYLRIVKLMYFDTPQDTAPIAPGIDARLLMSANGLAVLALGILPQPLMAVCVQAIGTSF.

Helical transmembrane passes span 13–33, 39–57, 76–96, 110–130, 131–151, 165–185, 206–226, 240–260, 277–297, 302–322, 330–350, 373–393, 406–426, and 459–479; these read ALPE…DAAV, YLAY…FLTV, PLSD…LVYS, FFVL…ASHF, LTLY…VALQ, FVLG…VYGV, IPLV…LGAV, PTAM…AFVV, MLVI…IAQS, MFAY…LAGS, MFYV…ILLL, LAFV…TVGF, IGYV…AFYY, and LAVL…VQAI.

This sequence belongs to the complex I subunit 2 family. NDH-1 is composed of 14 different subunits. Subunits NuoA, H, J, K, L, M, N constitute the membrane sector of the complex.

Its subcellular location is the cell inner membrane. The catalysed reaction is a quinone + NADH + 5 H(+)(in) = a quinol + NAD(+) + 4 H(+)(out). Its function is as follows. NDH-1 shuttles electrons from NADH, via FMN and iron-sulfur (Fe-S) centers, to quinones in the respiratory chain. The immediate electron acceptor for the enzyme in this species is believed to be ubiquinone. Couples the redox reaction to proton translocation (for every two electrons transferred, four hydrogen ions are translocated across the cytoplasmic membrane), and thus conserves the redox energy in a proton gradient. This chain is NADH-quinone oxidoreductase subunit N, found in Thiobacillus denitrificans (strain ATCC 25259 / T1).